We begin with the raw amino-acid sequence, 120 residues long: MTSTPITYKTLADSIFNDLINNIIKQHTLTSLTNIKDHSSLLNSSNSNTNSNTNGTIASNGGNGTTSDENNEIENSTIQDKSKLKQLETSRYFRCLNCGRNIAGGRFASHISKCLERKRK.

Residues Ser40–Asn60 are compositionally biased toward low complexity. The interval Ser40–Ser82 is disordered. Residues Phe93 to Cys114 form an SGF11-type zinc finger.

It belongs to the SGF11 family. Component of the 1.8 MDa SAGA transcription coactivator-HAT complex. SAGA is built of 5 distinct domains with specialized functions. Within the SAGA complex, SUS1, SGF11, SGF73 and UBP8 form an additional subcomplex of SAGA called the DUB module (deubiquitination module). Interacts directly with SGF73, SUS1 and UBP8.

It localises to the nucleus. Functions as a component of the transcription regulatory histone acetylation (HAT) complex SAGA. At the promoters, SAGA is required for recruitment of the basal transcription machinery. It influences RNA polymerase II transcriptional activity through different activities such as TBP interaction and promoter selectivity, interaction with transcription activators, and chromatin modification through histone acetylation and deubiquitination. SAGA acetylates nucleosomal histone H3 to some extent (to form H3K9ac, H3K14ac, H3K18ac and H3K23ac). SAGA interacts with DNA via upstream activating sequences (UASs). Involved in transcriptional regulation of a subset of SAGA-regulated genes. Within the SAGA complex, participates in a subcomplex, that specifically deubiquitinates histones H2B. This is SAGA-associated factor 11 from Candida albicans (strain SC5314 / ATCC MYA-2876) (Yeast).